The following is a 381-amino-acid chain: Endolytic peptidoglycan transglycosylase RlpA (381 aa).

Positions 1-19 (MRKQLPVICVAAGIVLLAA) are cleaved as a signal peptide. C20 is lipidated: N-palmitoyl cysteine. C20 carries S-diacylglycerol cysteine lipidation. The tract at residues 196-274 (LPPRPDLSGG…QPAPVSAPVA (79 aa)) is disordered. The segment covering 208-218 (SASSAPAQPQG) has biased composition (low complexity). Residues 304 to 380 (AAASGRFVVQ…AQLQSFIASA (77 aa)) form the SPOR domain.

It belongs to the RlpA family.

The protein resides in the cell membrane. Functionally, lytic transglycosylase with a strong preference for naked glycan strands that lack stem peptides. The chain is Endolytic peptidoglycan transglycosylase RlpA from Salmonella typhimurium (strain LT2 / SGSC1412 / ATCC 700720).